Here is a 173-residue protein sequence, read N- to C-terminus: Alpha-crystallin A chain (173 aa).

Met-1 is modified (N-acetylmethionine). A required for complex formation with BFSP1 and BFSP2 region spans residues Met-1–Glu-63. Deamidated glutamine; partial is present on Gln-6. Ser-45 carries the phosphoserine modification. Deamidated glutamine; partial is present on Gln-50. The sHSP domain maps to Val-52–Ser-162. N6-acetyllysine occurs at positions 70 and 99. Residue His-100 coordinates Zn(2+). Asn-101 carries the deamidated asparagine; partial modification. Glu-102 and His-107 together coordinate Zn(2+). The residue at position 122 (Ser-122) is a Phosphoserine. Deamidated asparagine; partial is present on Asn-123. The interval Pro-144–Ser-173 is disordered. Basic and acidic residues predominate over residues Gly-153–Pro-167. Residue His-154 coordinates Zn(2+). A glycan (O-linked (GlcNAc) serine) is linked at Ser-162.

This sequence belongs to the small heat shock protein (HSP20) family. In terms of assembly, heteromer composed of three CRYAA and one CRYAB subunits. Inter-subunit bridging via zinc ions enhances stability, which is crucial as there is no protein turn over in the lens. Can also form homodimers and homotetramers (dimers of dimers) which serve as the building blocks of homooligomers. Within homooligomers, the zinc-binding motif is created from residues of 3 different molecules. His-100 and Glu-102 from one molecule are ligands of the zinc ion, and His-107 and His-154 residues from additional molecules complete the site with tetrahedral coordination geometry. Part of a complex required for lens intermediate filament formation composed of BFSP1, BFSP2 and CRYAA. In terms of processing, acetylation at Lys-70 may increase chaperone activity. Post-translationally, undergoes age-dependent proteolytical cleavage at the C-terminus.

Its subcellular location is the cytoplasm. The protein localises to the nucleus. Contributes to the transparency and refractive index of the lens. Acts as a chaperone, preventing aggregation of various proteins under a wide range of stress conditions. Required for the correct formation of lens intermediate filaments as part of a complex composed of BFSP1, BFSP2 and CRYAA. The sequence is that of Alpha-crystallin A chain (CRYAA) from Halichoerus grypus (Gray seal).